A 504-amino-acid chain; its full sequence is Pentatricopeptide repeat-containing protein At1g05600 (504 aa).

PPR repeat units follow at residues 45–79, 80–114, 115–145, 151–185, 186–216, 225–259, 260–296, 297–331, 332–367, 368–398, 404–438, and 439–473; these read NGSVYATMIDILGKSNRVLEMKYVIERMKEDSCEC, KDSVFASVIRTFSRAGRLEDAISLFKSLHEFNCVN, WSLSFDTLLQEMVKESELEAACHIFRKYCYG, RITALNLLMKVLCQVNRSDLASQVFQEMNYQGCYP, DRDSYRILMKGFCLEGKLEEATHLLYSMFWR, DIVVYRILLDALCDAGEVDDAIEILGKILRKGLKA, PKRCYHHIEAGHWESSSEGIERVKRLLTETLIRGAIP, CLDSYSAMATDLFEEGKLVEGEEVLLAMRSKGFEP, TPFIYGAKVKALCRAGKLKEAVSVINKEMMQGHCLP, TVGVYNVLIKGLCDDGKSMEAVGYLKKMSKQ, NEETYQTLVDGLCRDGQFLEASQVMEEMLIKSHFP, and GVETYHMMIKGLCDMDRRYEAVMWLEEMVSQDMVP.

The protein belongs to the PPR family. P subfamily.

The polypeptide is Pentatricopeptide repeat-containing protein At1g05600 (Arabidopsis thaliana (Mouse-ear cress)).